A 297-amino-acid polypeptide reads, in one-letter code: Probable GTP 3',8-cyclase (297 aa).

The Radical SAM core domain maps to 4-220 (EFGREIRSFR…VVTRKFMQNR (217 aa)). GTP is bound at residue arginine 13. Cysteine 20 and cysteine 24 together coordinate [4Fe-4S] cluster. Tyrosine 26 contacts S-adenosyl-L-methionine. Residue cysteine 27 participates in [4Fe-4S] cluster binding. Position 61 (lysine 61) interacts with GTP. Glycine 65 lines the S-adenosyl-L-methionine pocket. Threonine 91 provides a ligand contact to GTP. Serine 115 is an S-adenosyl-L-methionine binding site. Lysine 151 is a binding site for GTP. 2 residues coordinate [4Fe-4S] cluster: cysteine 242 and cysteine 245. 247-249 (RIR) contacts GTP. [4Fe-4S] cluster is bound at residue cysteine 259.

This sequence belongs to the radical SAM superfamily. MoaA family. It depends on [4Fe-4S] cluster as a cofactor.

It catalyses the reaction GTP + AH2 + S-adenosyl-L-methionine = (8S)-3',8-cyclo-7,8-dihydroguanosine 5'-triphosphate + 5'-deoxyadenosine + L-methionine + A + H(+). It functions in the pathway cofactor biosynthesis; molybdopterin biosynthesis. In terms of biological role, catalyzes the cyclization of GTP to (8S)-3',8-cyclo-7,8-dihydroguanosine 5'-triphosphate. The sequence is that of Probable GTP 3',8-cyclase from Methanococcus vannielii (strain ATCC 35089 / DSM 1224 / JCM 13029 / OCM 148 / SB).